A 576-amino-acid polypeptide reads, in one-letter code: Sulfite reductase [NADPH] hemoprotein beta-component (576 aa).

[4Fe-4S] cluster is bound by residues Cys-435, Cys-441, Cys-480, and Cys-484. Cys-484 contacts siroheme.

Belongs to the nitrite and sulfite reductase 4Fe-4S domain family. As to quaternary structure, alpha(8)-beta(8). The alpha component is a flavoprotein, the beta component is a hemoprotein. Siroheme serves as cofactor. Requires [4Fe-4S] cluster as cofactor.

It catalyses the reaction hydrogen sulfide + 3 NADP(+) + 3 H2O = sulfite + 3 NADPH + 4 H(+). The protein operates within sulfur metabolism; hydrogen sulfide biosynthesis; hydrogen sulfide from sulfite (NADPH route): step 1/1. Functionally, component of the sulfite reductase complex that catalyzes the 6-electron reduction of sulfite to sulfide. This is one of several activities required for the biosynthesis of L-cysteine from sulfate. The chain is Sulfite reductase [NADPH] hemoprotein beta-component from Proteus mirabilis (strain HI4320).